The following is a 37-amino-acid chain: Large ribosomal subunit protein bL36 (37 aa).

Belongs to the bacterial ribosomal protein bL36 family.

This chain is Large ribosomal subunit protein bL36, found in Nostoc punctiforme (strain ATCC 29133 / PCC 73102).